We begin with the raw amino-acid sequence, 597 residues long: Dynein intermediate chain 3, ciliary (597 aa).

WD repeat units follow at residues 159–210, 213–253, 260–301, 314–354, 361–400, 404–444, and 449–488; these read EIKR…KPEF, KPVS…QAVE, SHHD…EPTE, ENAQ…PPEK, EHIG…SSIM, YHMS…KDPT, and VSDD…CTMQ. 2 disordered regions span residues 512-546 and 562-597; these read RQRE…VAAA and AAQQ…EKEG. Acidic residues predominate over residues 528–542; it reads QDDDEEGGPDEEEDL. The segment covering 584–597 has biased composition (basic and acidic residues); that stretch reads GSEKKDTENGEKEG.

This sequence belongs to the dynein intermediate chain family. In terms of assembly, consists of at least two heavy chains (alpha and beta), three intermediate chains and several light chains.

The protein localises to the cytoplasm. It is found in the cytoskeleton. It localises to the cilium axoneme. Functionally, may play a role in the regulation of dynein heavy chain activity. In Heliocidaris crassispina (Sea urchin), this protein is Dynein intermediate chain 3, ciliary.